We begin with the raw amino-acid sequence, 170 residues long: Putative phosphoesterase OB1230 (170 aa).

The Proton donor role is filled by His34. Short sequence motifs (HXTX) lie at residues 34 to 37 and 115 to 118; these read HLTL and HITI. The Proton acceptor role is filled by His115.

The protein belongs to the 2H phosphoesterase superfamily. YjcG family.

This chain is Putative phosphoesterase OB1230, found in Oceanobacillus iheyensis (strain DSM 14371 / CIP 107618 / JCM 11309 / KCTC 3954 / HTE831).